Reading from the N-terminus, the 237-residue chain is Ribonuclease 3 (237 aa).

Positions 8-134 (RSALLEKLGV…VIGAVYLDAG (127 aa)) constitute an RNase III domain. A Mg(2+)-binding site is contributed by Glu47. The active site involves Asp51. Positions 120 and 123 each coordinate Mg(2+). Residue Glu123 is part of the active site. The 69-residue stretch at 161 to 229 (DPKTSLQEAA…ALSAWTALTN (69 aa)) folds into the DRBM domain.

The protein belongs to the ribonuclease III family. As to quaternary structure, homodimer. Mg(2+) serves as cofactor.

It localises to the cytoplasm. The enzyme catalyses Endonucleolytic cleavage to 5'-phosphomonoester.. Its function is as follows. Digests double-stranded RNA. Involved in the processing of primary rRNA transcript to yield the immediate precursors to the large and small rRNAs (23S and 16S). Processes some mRNAs, and tRNAs when they are encoded in the rRNA operon. Processes pre-crRNA and tracrRNA of type II CRISPR loci if present in the organism. The protein is Ribonuclease 3 of Leifsonia xyli subsp. xyli (strain CTCB07).